A 441-amino-acid chain; its full sequence is Histone-lysine N-methyltransferase set9 (441 aa).

Residues 108 to 221 form the SET domain; sequence CKFEICSTNQ…PGEEITTFYS (114 aa).

It belongs to the class V-like SAM-binding methyltransferase superfamily. Histone-lysine methyltransferase family. Suvar4-20 subfamily.

Its subcellular location is the nucleus. It is found in the chromosome. The enzyme catalyses L-lysyl(20)-[histone H4] + 3 S-adenosyl-L-methionine = N(6),N(6),N(6)-trimethyl-L-lysyl(20)-[histone H4] + 3 S-adenosyl-L-homocysteine + 3 H(+). In terms of biological role, histone methyltransferase that specifically trimethylates 'Lys-20' of histone H4 to form H4K20me3. H4 'Lys-20' methylation is apparently not involved in the regulation of gene expression or heterochromatin function but participates in DNA damage response by giving a 'histone mark' required for the recruitment of the checkpoint protein Crb2 to sites of DNA damage. The polypeptide is Histone-lysine N-methyltransferase set9 (set9) (Schizosaccharomyces pombe (strain 972 / ATCC 24843) (Fission yeast)).